The sequence spans 238 residues: Succinate dehydrogenase iron-sulfur subunit (238 aa).

The region spanning 8–97 is the 2Fe-2S ferredoxin-type domain; the sequence is YRYNPDVDDA…KIVIRPLPGL (90 aa). 3 residues coordinate [2Fe-2S] cluster: cysteine 55, cysteine 60, and cysteine 75. One can recognise a 4Fe-4S ferredoxin-type domain in the interval 139–169; the sequence is QREKLDGLYECILCACCSTSCPSFWWNPDKF. 3 residues coordinate [4Fe-4S] cluster: cysteine 149, cysteine 152, and cysteine 155. Cysteine 159 serves as a coordination point for [3Fe-4S] cluster. Tryptophan 164 is a binding site for a ubiquinone. Residues cysteine 206 and cysteine 212 each coordinate [3Fe-4S] cluster. Cysteine 216 is a binding site for [4Fe-4S] cluster.

It belongs to the succinate dehydrogenase/fumarate reductase iron-sulfur protein family. In terms of assembly, part of an enzyme complex containing four subunits: a flavoprotein, an iron-sulfur, cytochrome b-556, and a hydrophobic anchor protein. The complex forms trimers. It depends on [2Fe-2S] cluster as a cofactor. The cofactor is [3Fe-4S] cluster. [4Fe-4S] cluster serves as cofactor.

The protein resides in the cell inner membrane. It carries out the reaction a quinone + succinate = fumarate + a quinol. It functions in the pathway carbohydrate metabolism; tricarboxylic acid cycle; fumarate from succinate (bacterial route): step 1/1. Two distinct, membrane-bound, FAD-containing enzymes are responsible for the catalysis of fumarate and succinate interconversion; the fumarate reductase is used in anaerobic growth, and the succinate dehydrogenase is used in aerobic growth. This Escherichia coli (strain K12) protein is Succinate dehydrogenase iron-sulfur subunit (sdhB).